Consider the following 354-residue polypeptide: DNA polymerase IV (354 aa).

The region spanning 14 to 198 (IIHIDMDAFF…MDIAKFHGVG (185 aa)) is the UmuC domain. Residues aspartate 18 and aspartate 116 each contribute to the Mg(2+) site. Glutamate 117 is a catalytic residue.

This sequence belongs to the DNA polymerase type-Y family. Monomer. Mg(2+) serves as cofactor.

It localises to the cytoplasm. The enzyme catalyses DNA(n) + a 2'-deoxyribonucleoside 5'-triphosphate = DNA(n+1) + diphosphate. Poorly processive, error-prone DNA polymerase involved in untargeted mutagenesis. Copies undamaged DNA at stalled replication forks, which arise in vivo from mismatched or misaligned primer ends. These misaligned primers can be extended by PolIV. Exhibits no 3'-5' exonuclease (proofreading) activity. May be involved in translesional synthesis, in conjunction with the beta clamp from PolIII. The polypeptide is DNA polymerase IV (Streptococcus sanguinis (strain SK36)).